The sequence spans 297 residues: MDKQEAKHINMPSPSTCEHKSVEAYLFIDPLCKDCWEIEPFIIKLWLEYGKYFSIRHIVTGKVDGTNASSHKWNKPANIRFVWEKTTSLHGFSCDGKVHMQEASSTPYLVSMAIKAAELQGRKAGSKFLRKLQEYIFLENVSNPDCELLLACAKDSDIDVEEFKKDLYSASAKKAFQCDLKFTNEMHITEIPSLVFFHANSDEEGIKIAGTYSYDVYVQLLKELVKCEIEPEPLPPLEVLLEATQFISSKEVAFIYDCSKQEIERELKKLQLKRKVQMIDVKCERYWKWIAKEKDLV.

It belongs to the SpxH family. Interacts with Spx.

It is found in the cytoplasm. In terms of biological role, adapter protein required for efficient degradation of Spx by ClpXP under non-stress conditions. Interaction with Spx stabilizes Spx and exposes the C-terminus of Spx for recognition and proteolysis by ClpXP. This is ClpXP adapter protein SpxH from Bacillus cereus (strain ZK / E33L).